The primary structure comprises 357 residues: Peptide chain release factor 1 (357 aa).

Glutamine 236 carries the post-translational modification N5-methylglutamine.

It belongs to the prokaryotic/mitochondrial release factor family. In terms of processing, methylated by PrmC. Methylation increases the termination efficiency of RF1.

It localises to the cytoplasm. In terms of biological role, peptide chain release factor 1 directs the termination of translation in response to the peptide chain termination codons UAG and UAA. The polypeptide is Peptide chain release factor 1 (prfA) (Mycobacterium bovis (strain ATCC BAA-935 / AF2122/97)).